The sequence spans 229 residues: Flagellar L-ring protein (229 aa).

A signal peptide spans 1 to 23 (MNPLTRVALAVAAFAALVLALSA). C24 carries N-palmitoyl cysteine lipidation. The S-diacylglycerol cysteine moiety is linked to residue C24.

Belongs to the FlgH family. The basal body constitutes a major portion of the flagellar organelle and consists of four rings (L,P,S, and M) mounted on a central rod.

The protein localises to the cell outer membrane. Its subcellular location is the bacterial flagellum basal body. Its function is as follows. Assembles around the rod to form the L-ring and probably protects the motor/basal body from shearing forces during rotation. The protein is Flagellar L-ring protein of Anaeromyxobacter sp. (strain K).